A 910-amino-acid polypeptide reads, in one-letter code: MLEKTYDAAATEPKIAERWEEAGAFKAGAGAKPGADPFAVVIPPPNVTGSLHMGHALNNTIQDIMVRFERMRGKNVLWQPGMDHAGIATQMVVERQLAERKEPNRHAMGREKFIERIWQWKAESGGMISNQLRRLGASCDWSRERFTMDEGLSRAVLEVFVTLYKQGLIYRDKRLVNWDPKLLTAISDIEVESREIKGHLWHFRYPLENVPFDPENPHTYIIVATTRPETMLGDTGVAVNPKDERYHALVGNDVILPLVGRHIPIVADDYADPEAGSGTVKITPAHDFNDFEVGKRNNLRAINILTPEAAITLKDNVDFLEDLELTAELKALIVELDGMDRFAARKRIVELMDERGYLEKIDDHTHAVPHGDRGGVPIEPYLTDQWYVNAGELAKPAMAAVRDGRTQIVPKNWEKTYFDWMENIQPWCVSRQLWWGHQIPAWYGPDSHCFVEKSEAEAKAAARAHYGEDVALERDTDVLDTWFSSALWPFSTLGWPDKTPELATYYPTSVLVTGFDILFFWVARMMMMGLHFMEEIPFHTVYLHALVRDKHGAKMSKSKGNVIDPLELMDEYGADALRFTLAIMAAQGRDVKLDPARIAGYRNFGTKLWNATRFAQMNGVKLAPDFRPENAKLAVNRWILTELTRATRAVTEGIATYRFNEAAGAAYRFVWNQFCDWYLEFLKPIFMGDDEAAKAEAQATAAYCLDQVYKLLHPFMPFMTEELWSLTASEGKKRDTVLALAEWPELSFEDEDAAADINWLVDLVTGIRSVRAEMNVPAGAIAPVVVLDANKVTVDRFARHDAAIKRLARVERISFEQQAPKGAAQMLLGEATICIPLGSLIDLQAEAARLAKEAGKIAAEMDRIEKKLANEKFVANAREEVVEAERERLLELKEAAQRVATAESRIRDAS.

Positions Pro-45–His-55 match the 'HIGH' region motif. The 'KMSKS' region signature appears at Lys-554–Ser-558. Residue Lys-557 participates in ATP binding. The stretch at Asp-842–Ser-910 forms a coiled coil.

Belongs to the class-I aminoacyl-tRNA synthetase family. ValS type 1 subfamily. As to quaternary structure, monomer.

It is found in the cytoplasm. The enzyme catalyses tRNA(Val) + L-valine + ATP = L-valyl-tRNA(Val) + AMP + diphosphate. Catalyzes the attachment of valine to tRNA(Val). As ValRS can inadvertently accommodate and process structurally similar amino acids such as threonine, to avoid such errors, it has a 'posttransfer' editing activity that hydrolyzes mischarged Thr-tRNA(Val) in a tRNA-dependent manner. The sequence is that of Valine--tRNA ligase from Brucella melitensis biotype 1 (strain ATCC 23456 / CCUG 17765 / NCTC 10094 / 16M).